Consider the following 398-residue polypeptide: Nucleotide-sugar uncharacterized transporter 2 (398 aa).

Helical transmembrane passes span 54 to 74 (FCGP…IILA), 84 to 104 (FNFP…LLAF), 119 to 139 (TTPF…SGLA), 150 to 170 (FYQM…FVLF), 179 to 199 (VMAL…DLEF), 201 to 221 (LFGA…KILW), 242 to 262 (FTVF…VLLF), 271 to 291 (AILI…LALG), 299 to 319 (VVLG…IFGS), and 322 to 342 (GFIS…YTWL).

It belongs to the TPT transporter family. TPT (TC 2.A.7.9) subfamily.

Its subcellular location is the membrane. This Arabidopsis thaliana (Mouse-ear cress) protein is Nucleotide-sugar uncharacterized transporter 2.